Reading from the N-terminus, the 166-residue chain is Transcription antitermination protein NusB (166 aa).

Over residues 1–18 the composition is skewed to basic and acidic residues; it reads MISDESDRFNPRDPKPAD. Residues 1–28 are disordered; sequence MISDESDRFNPRDPKPADAGKPSKSAKR.

It belongs to the NusB family.

Functionally, involved in transcription antitermination. Required for transcription of ribosomal RNA (rRNA) genes. Binds specifically to the boxA antiterminator sequence of the ribosomal RNA (rrn) operons. This Pseudomonas putida (strain W619) protein is Transcription antitermination protein NusB.